The following is a 201-amino-acid chain: Adenylyl-sulfate kinase (201 aa).

Residue 35–42 coordinates ATP; sequence GLSGSGKS. Serine 109 acts as the Phosphoserine intermediate in catalysis.

It belongs to the APS kinase family.

It catalyses the reaction adenosine 5'-phosphosulfate + ATP = 3'-phosphoadenylyl sulfate + ADP + H(+). The protein operates within sulfur metabolism; hydrogen sulfide biosynthesis; sulfite from sulfate: step 2/3. Functionally, catalyzes the synthesis of activated sulfate. This Enterobacter sp. (strain 638) protein is Adenylyl-sulfate kinase.